A 347-amino-acid polypeptide reads, in one-letter code: UDP-3-O-acylglucosamine N-acyltransferase (347 aa).

Catalysis depends on histidine 241, which acts as the Proton acceptor.

Belongs to the transferase hexapeptide repeat family. LpxD subfamily. As to quaternary structure, homotrimer.

The enzyme catalyses a UDP-3-O-[(3R)-3-hydroxyacyl]-alpha-D-glucosamine + a (3R)-hydroxyacyl-[ACP] = a UDP-2-N,3-O-bis[(3R)-3-hydroxyacyl]-alpha-D-glucosamine + holo-[ACP] + H(+). The protein operates within bacterial outer membrane biogenesis; LPS lipid A biosynthesis. Its function is as follows. Catalyzes the N-acylation of UDP-3-O-acylglucosamine using 3-hydroxyacyl-ACP as the acyl donor. Is involved in the biosynthesis of lipid A, a phosphorylated glycolipid that anchors the lipopolysaccharide to the outer membrane of the cell. The protein is UDP-3-O-acylglucosamine N-acyltransferase of Nitrosococcus oceani (strain ATCC 19707 / BCRC 17464 / JCM 30415 / NCIMB 11848 / C-107).